Consider the following 160-residue polypeptide: Protein shisa-like-2B (160 aa).

The helical transmembrane segment at 65–85 (IGALIGLGIAALVLLAFVISV) threads the bilayer.

It belongs to the shisa family.

It localises to the membrane. In Homo sapiens (Human), this protein is Protein shisa-like-2B.